Here is a 101-residue protein sequence, read N- to C-terminus: Small ribosomal subunit protein bS6 (101 aa).

It belongs to the bacterial ribosomal protein bS6 family.

In terms of biological role, binds together with bS18 to 16S ribosomal RNA. This is Small ribosomal subunit protein bS6 from Pseudarthrobacter chlorophenolicus (strain ATCC 700700 / DSM 12829 / CIP 107037 / JCM 12360 / KCTC 9906 / NCIMB 13794 / A6) (Arthrobacter chlorophenolicus).